We begin with the raw amino-acid sequence, 132 residues long: Small ribosomal subunit protein uS8 (132 aa).

Belongs to the universal ribosomal protein uS8 family. Part of the 30S ribosomal subunit. Contacts proteins S5 and S12.

One of the primary rRNA binding proteins, it binds directly to 16S rRNA central domain where it helps coordinate assembly of the platform of the 30S subunit. This is Small ribosomal subunit protein uS8 from Xylella fastidiosa (strain 9a5c).